Reading from the N-terminus, the 417-residue chain is MSSISNELSVTSSQNVISNSKEQRKKKILFKCALTNTISDVLTNREGWAQTQGDDWQFFWVTREWMTTCYDKHKFSEKQMICHFRNDFELTRKDFLIKNYKKARKAKEKSGIDVVSEFNFLPSSYVLPTEYHLFVEEFRKYPNDTIWIMKPVAGAQGKGIFLFRKLKHVQEWKKKDSSGSEALPYVVQCYVHNPYLVGGKKFDVRIYVLVTSFRPLNAWVHREGFARFSHSRYSTDSVDDAFVHLTNVAVAKTAADYDPERGLKWSLPKLFRFFKSVHGQSKLSKTMNDLTNVIIESLKSVQNLIIQDNHCFELYGYDILFDENLKPWLLEVNASPSLTASSQEDFELKYRILNHMIDVLDIEKKLIGNENEVGGFDLLIKNSKPVELCKVDFHTQPFFGTQFNLRLGDYVEATPMP.

Residues 23-372 (QRKKKILFKC…EKKLIGNENE (350 aa)) enclose the TTL domain. Residues 188–191 (QCYV), Lys201, and Asp203 contribute to the ATP site.

It belongs to the tubulin--tyrosine ligase family. As to expression, expressed in head sensory neurons.

Its function is as follows. Polyglutamylase that forms polyglutamate side chains on tubulin. Acts when complexed with other proteins. Appears to be dispensable for polar spindle formation in dividing embryonic cells, for cilia-dependent osmotic avoidance and for male mating behavior. Probably by regulating microtubule stability via the glutamylation of tubulin, regulates PLM axon developmental growth. In Caenorhabditis elegans, this protein is Probable tubulin polyglutamylase ttll-9.